The primary structure comprises 785 residues: Probable ATP-dependent RNA helicase ddx17 (785 aa).

Composition is skewed to low complexity over residues 1 to 11 (MSYNSSNSGSG), 18 to 37 (SGNS…GNRS), 49 to 95 (SYNR…YGPS), and 105 to 177 (GSSS…NGYS). The interval 1-233 (MSYNSSNSGS…TPSTSYNGGS (233 aa)) is disordered. Residues 178 to 191 (KPTSNYSYSNGYTG) show a composition bias toward polar residues. The segment covering 192–233 (PTTNYSSYSNGYSTPPTSTSTSSSSTTTTTTTTPSTSYNGGS) has biased composition (low complexity). The short motif at 384 to 412 (MQFTQAPFPGYLMKEIIGAGFPNPTPIQS) is the Q motif element. Residues 415-590 (WPIALKGRDI…HDFLTDHIQV (176 aa)) enclose the Helicase ATP-binding domain. ATP is bound at residue 428–435 (AKTGSGKT). The DEAD box motif lies at 538–541 (DEAD). The region spanning 602 to 763 (NVRQIVEVCQ…KIPIELSNLS (162 aa)) is the Helicase C-terminal domain. The span at 764 to 774 (VTPSTSSNTKK) shows a compositional bias: polar residues. The disordered stretch occupies residues 764-785 (VTPSTSSNTKKFSPYPTYSKRY).

This sequence belongs to the DEAD box helicase family. DDX5/DBP2 subfamily.

The protein resides in the cytoplasm. It is found in the nucleus. It catalyses the reaction ATP + H2O = ADP + phosphate + H(+). Probable ATP-dependent RNA helicase which may be involved nonsense-mediated mRNA decay and ribosome biogenesis through rRNA processing. The chain is Probable ATP-dependent RNA helicase ddx17 (ddx17) from Dictyostelium discoideum (Social amoeba).